We begin with the raw amino-acid sequence, 326 residues long: Putative ribose-phosphate pyrophosphokinase 2 (326 aa).

Residues 43–45 (DGE) and 102–103 (RQ) contribute to the ATP site. Residue histidine 136 coordinates Mg(2+). Residues aspartate 226 and 230-234 (NTGKT) each bind D-ribose 5-phosphate.

Belongs to the ribose-phosphate pyrophosphokinase family. Class I subfamily. As to quaternary structure, homohexamer. Mg(2+) serves as cofactor.

Its subcellular location is the cytoplasm. The enzyme catalyses D-ribose 5-phosphate + ATP = 5-phospho-alpha-D-ribose 1-diphosphate + AMP + H(+). Its pathway is metabolic intermediate biosynthesis; 5-phospho-alpha-D-ribose 1-diphosphate biosynthesis; 5-phospho-alpha-D-ribose 1-diphosphate from D-ribose 5-phosphate (route I): step 1/1. Its function is as follows. Involved in the biosynthesis of the central metabolite phospho-alpha-D-ribosyl-1-pyrophosphate (PRPP) via the transfer of pyrophosphoryl group from ATP to 1-hydroxyl of ribose-5-phosphate (Rib-5-P). The chain is Putative ribose-phosphate pyrophosphokinase 2 from Streptococcus mutans serotype c (strain ATCC 700610 / UA159).